The following is a 353-amino-acid chain: Purine nucleoside phosphorylase (353 aa).

The span at 1–16 (MSKFSYLQNGKASTNG) shows a compositional bias: polar residues. The tract at residues 1–42 (MSKFSYLQNGKASTNGVPHANGHHQQHQNGHSNGVARNGGTA) is disordered. Phosphate-binding positions include Ser-98, His-129, 149–151 (RFH), and Ala-181. Residue Glu-266 coordinates a purine D-ribonucleoside. Ser-285 lines the phosphate pocket. A purine D-ribonucleoside is bound at residue Asn-308.

The protein belongs to the PNP/MTAP phosphorylase family. Homotrimer.

It catalyses the reaction inosine + phosphate = alpha-D-ribose 1-phosphate + hypoxanthine. It carries out the reaction guanosine + phosphate = alpha-D-ribose 1-phosphate + guanine. The enzyme catalyses 2'-deoxyguanosine + phosphate = 2-deoxy-alpha-D-ribose 1-phosphate + guanine. The catalysed reaction is 2'-deoxyinosine + phosphate = 2-deoxy-alpha-D-ribose 1-phosphate + hypoxanthine. Its pathway is purine metabolism; purine nucleoside salvage. Its activity is regulated as follows. Inhibited by 5'-deaza-1'-aza-2c-deoxy-1'-(9-methylene) immucillin-H (DADMe-ImmH). As part of the purine salvage pathway, catalyzes the phosphorolytic breakdown of the N-glycosidic bond in the beta-(deoxy)ribonucleoside molecules, with the formation of the corresponding free purine bases and pentose-1-phosphate. Preferentially acts on 2'-deoxyinosine and inosine, and to a lesser extent on 2'-deoxyguanosine and guanosine. Has no activity towards adenosine or 2'-deoxyadenosine. This is Purine nucleoside phosphorylase from Anopheles gambiae (African malaria mosquito).